Consider the following 133-residue polypeptide: Magnetosome protein MamC (133 aa).

Over 1-5 the chain is Cytoplasmic; that stretch reads MAAFN. A helical transmembrane segment spans residues 6 to 26; the sequence is LALYLSKSIPGVGVLGGVIGG. The Lumenal portion of the chain corresponds to 27–67; it reads SAALAKNLKAKQRGEITTEEAVIDTGKEALGAGLATTVSAY. Residues 37–57 are magnetite interacting component (MIC) binds magnetite; it reads KQRGEITTEEAVIDTGKEALG. The chain crosses the membrane as a helical span at residues 68-88; the sequence is AAGVVGGGLVVSLGTAFAVAV. The Cytoplasmic segment spans residues 89–133; sequence AGKYAWDYGMEQMEAKLQEKKHQEQGGQTYGDNPDPFDPQELETP. The interval 105–133 is disordered; the sequence is LQEKKHQEQGGQTYGDNPDPFDPQELETP.

The protein belongs to the magnetosome MamC family. In terms of assembly, probably interacts with MamA.

It localises to the magnetosome membrane. Probably helps control the size of magnetite crystals; in vitro synthesis of magnetite yields larger and more well-developed magnetite crystals in the presence of purified MamC. Binds Fe(3+). The lumenal domain probably binds magnetite crystals, affecting crystal size and shape. Purified MamC self-assembles into micelles in the presence of ferric chloride hexahydrate (FeCl(3).6H(2)O); both oxygen and iron are present in the proteinaceous micelles. Whether this is relevant in vivo is unknown. This Magnetococcus marinus (strain ATCC BAA-1437 / JCM 17883 / MC-1) protein is Magnetosome protein MamC.